Reading from the N-terminus, the 307-residue chain is Follistatin-related protein 1 (307 aa).

Positions 1 to 19 (MMWRRWLALALVAVAWVHA) are cleaved as a signal peptide. Positions 29–52 (ICANVFCGAGRECAVTEKGEPTCL) constitute a Follistatin-like domain. 5 cysteine pairs are disulfide-bonded: C30-C41, C35-C51, C53-C83, C57-C76, and C65-C97. Residues 47 to 99 (GEPTCLCIEQCKPHKRPVCGSNGKTYLNHCELHRDACLTGSKIQVDYDGHCKE) enclose the Kazal-like domain. N143 carries N-linked (GlcNAc...) asparagine glycosylation. The EF-hand 1 domain occupies 143 to 177 (NYSEILDKYFKNFDNGDSRLDSSEFLKFVEQNETA). At S164 the chain carries Phosphoserine. N-linked (GlcNAc...) asparagine glycosylation is found at N174 and N179. One can recognise an EF-hand 2 domain in the interval 192–227 (LRGLCVDALIELSDENADWKLSFQEFLKCLNPSFNP). The VWFC domain maps to 232-286 (CALEDETYADGAETEVDCNRCVCACGNWVCTAMTCDGKNQKGAQTQAEEEMTRYV).

As to quaternary structure, homodimer. Interacts with SCN10A. Interacts with DIP2A; DIP2A may act as a cell surface receptor for FSTL1. Interacts with BMP4. Interacts with CD14; this interaction promotes TL4-mediated signaling cascade.

Its subcellular location is the secreted. Secreted glycoprotein that is involved in various physiological processes, such as angiogenesis, regulation of the immune response, cell proliferation and differentiation. Plays a role in the development of the central nervous system, skeletal system, lungs, and ureter. Promotes endothelial cell survival, migration and differentiation into network structures in an AKT-dependent manner. Also promotes survival of cardiac myocytes. Initiates various signaling cascades by activating different receptors on the cell surface such as DIP2A, TLR4 or BMP receptors. This Bos taurus (Bovine) protein is Follistatin-related protein 1 (FSTL1).